Here is a 247-residue protein sequence, read N- to C-terminus: V-type proton ATPase subunit D (247 aa).

The protein belongs to the V-ATPase D subunit family. As to quaternary structure, V-ATPase is a heteromultimeric enzyme made up of two complexes: the ATP-hydrolytic V1 complex and the proton translocation V0 complex. The V1 complex consists of three catalytic AB heterodimers that form a heterohexamer, three peripheral stalks each consisting of EG heterodimers, one central rotor including subunits D and F, and the regulatory subunits C and H. The proton translocation complex V0 consists of the proton transport subunit a, a ring of proteolipid subunits c9c'', rotary subunit d, subunits e and f, and the accessory subunits ATP6AP1/Ac45 and ATP6AP2/PRR. Interacts with SNX10.

The protein localises to the membrane. It localises to the cytoplasmic vesicle. The protein resides in the clathrin-coated vesicle membrane. Its subcellular location is the cytoplasm. It is found in the cytoskeleton. The protein localises to the microtubule organizing center. It localises to the centrosome. The protein resides in the cell projection. Its subcellular location is the cilium. Subunit of the V1 complex of vacuolar(H+)-ATPase (V-ATPase), a multisubunit enzyme composed of a peripheral complex (V1) that hydrolyzes ATP and a membrane integral complex (V0) that translocates protons. V-ATPase is responsible for acidifying and maintaining the pH of intracellular compartments and in some cell types, is targeted to the plasma membrane, where it is responsible for acidifying the extracellular environment. May play a role in cilium biogenesis through regulation of the transport and the localization of proteins to the cilium. The protein is V-type proton ATPase subunit D (ATP6V1D) of Homo sapiens (Human).